The sequence spans 318 residues: Nucleotide-binding protein Lcho_3490 (318 aa).

35 to 42 (GISGGGKS) is an ATP binding site. 84 to 87 (DVRN) is a GTP binding site.

Belongs to the RapZ-like family.

Functionally, displays ATPase and GTPase activities. This is Nucleotide-binding protein Lcho_3490 from Leptothrix cholodnii (strain ATCC 51168 / LMG 8142 / SP-6) (Leptothrix discophora (strain SP-6)).